The following is a 127-amino-acid chain: Large ribosomal subunit protein bL12 (127 aa).

Belongs to the bacterial ribosomal protein bL12 family. Homodimer. Part of the ribosomal stalk of the 50S ribosomal subunit. Forms a multimeric L10(L12)X complex, where L10 forms an elongated spine to which 2 to 4 L12 dimers bind in a sequential fashion. Binds GTP-bound translation factors.

Forms part of the ribosomal stalk which helps the ribosome interact with GTP-bound translation factors. Is thus essential for accurate translation. The sequence is that of Large ribosomal subunit protein bL12 from Chloroherpeton thalassium (strain ATCC 35110 / GB-78).